We begin with the raw amino-acid sequence, 142 residues long: Succinate dehydrogenase subunit 6, mitochondrial (142 aa).

As to quaternary structure, component of complex II composed of eight subunits in plants: four classical SDH subunits SDH1, SDH2, SDH3 and SDH4 (a flavoprotein (FP), an iron-sulfur protein (IP), and a cytochrome b composed of a large and a small subunit.), as well as four subunits unknown in mitochondria from bacteria and heterotrophic eukaryotes.

The protein resides in the mitochondrion inner membrane. It functions in the pathway carbohydrate metabolism; tricarboxylic acid cycle. The chain is Succinate dehydrogenase subunit 6, mitochondrial from Oryza sativa subsp. japonica (Rice).